Here is a 149-residue protein sequence, read N- to C-terminus: Large ribosomal subunit protein uL11 (149 aa).

Belongs to the universal ribosomal protein uL11 family. In terms of assembly, part of the ribosomal stalk of the 50S ribosomal subunit. Interacts with L10 and the large rRNA to form the base of the stalk. L10 forms an elongated spine to which L12 dimers bind in a sequential fashion forming a multimeric L10(L12)X complex. Post-translationally, one or more lysine residues are methylated.

Its function is as follows. Forms part of the ribosomal stalk which helps the ribosome interact with GTP-bound translation factors. The protein is Large ribosomal subunit protein uL11 of Azorhizobium caulinodans (strain ATCC 43989 / DSM 5975 / JCM 20966 / LMG 6465 / NBRC 14845 / NCIMB 13405 / ORS 571).